The following is a 520-amino-acid chain: GMP synthase [glutamine-hydrolyzing] (520 aa).

The region spanning 9 to 202 (SVLIVDFGSQ…IHNIAGIKGD (194 aa)) is the Glutamine amidotransferase type-1 domain. Cys86 acts as the Nucleophile in catalysis. Catalysis depends on residues His176 and Glu178. Residues 203–395 (WSMSAYRQKA…LGLPDSFIGR (193 aa)) enclose the GMPS ATP-PPase domain. 230-236 (SGGVDSS) provides a ligand contact to ATP.

In terms of assembly, homodimer.

It catalyses the reaction XMP + L-glutamine + ATP + H2O = GMP + L-glutamate + AMP + diphosphate + 2 H(+). The protein operates within purine metabolism; GMP biosynthesis; GMP from XMP (L-Gln route): step 1/1. Its function is as follows. Catalyzes the synthesis of GMP from XMP. The protein is GMP synthase [glutamine-hydrolyzing] of Rhizobium johnstonii (strain DSM 114642 / LMG 32736 / 3841) (Rhizobium leguminosarum bv. viciae).